The chain runs to 167 residues: Ubiquitin-fold modifier-conjugating enzyme 1 (167 aa).

Residue cysteine 116 is the Glycyl thioester intermediate of the active site.

This sequence belongs to the ubiquitin-conjugating enzyme family. UFC1 subfamily. In terms of assembly, interacts with UBA5 (via C-terminus). Interacts with UFL1. Interacts with UFM1.

In terms of biological role, E2-like enzyme which specifically catalyzes the second step in ufmylation. Accepts the ubiquitin-like modifier UFM1 from the E1 enzyme UBA5 and forms an intermediate with UFM1 via a thioester linkage. Ufmylation is involved in various processes, such as ribosome recycling, response to DNA damage, interferon response or reticulophagy (also called ER-phagy). This chain is Ubiquitin-fold modifier-conjugating enzyme 1, found in Osmerus mordax (Rainbow smelt).